The primary structure comprises 220 residues: Superoxide dismutase [Cu-Zn], chloroplastic (220 aa).

A chloroplast-targeting transit peptide spans 1-66 (MAAHCILFSS…AAPKPLTVFA (66 aa)). Histidine 112, histidine 114, and histidine 129 together coordinate Cu cation. A disulfide bond links cysteine 123 and cysteine 212. Histidine 129, histidine 137, histidine 146, and aspartate 149 together coordinate Zn(2+). A Cu cation-binding site is contributed by histidine 186.

This sequence belongs to the Cu-Zn superoxide dismutase family. As to quaternary structure, homotetramer. Cu cation is required as a cofactor. The cofactor is Zn(2+).

It localises to the plastid. The protein localises to the chloroplast. It carries out the reaction 2 superoxide + 2 H(+) = H2O2 + O2. In terms of biological role, destroys radicals which are normally produced within the cells and which are toxic to biological systems. This Solidago canadensis var. scabra (Tall goldenrod) protein is Superoxide dismutase [Cu-Zn], chloroplastic (SODCP).